Consider the following 311-residue polypeptide: Aspartate carbamoyltransferase catalytic subunit (311 aa).

Residues Arg55 and Thr56 each contribute to the carbamoyl phosphate site. Lys85 lines the L-aspartate pocket. Arg106, His135, and Gln138 together coordinate carbamoyl phosphate. Residues Arg168 and Arg230 each coordinate L-aspartate. The carbamoyl phosphate site is built by Leu268 and Pro269.

This sequence belongs to the aspartate/ornithine carbamoyltransferase superfamily. ATCase family. In terms of assembly, heterododecamer (2C3:3R2) of six catalytic PyrB chains organized as two trimers (C3), and six regulatory PyrI chains organized as three dimers (R2).

It carries out the reaction carbamoyl phosphate + L-aspartate = N-carbamoyl-L-aspartate + phosphate + H(+). The protein operates within pyrimidine metabolism; UMP biosynthesis via de novo pathway; (S)-dihydroorotate from bicarbonate: step 2/3. Functionally, catalyzes the condensation of carbamoyl phosphate and aspartate to form carbamoyl aspartate and inorganic phosphate, the committed step in the de novo pyrimidine nucleotide biosynthesis pathway. This is Aspartate carbamoyltransferase catalytic subunit from Yersinia enterocolitica serotype O:8 / biotype 1B (strain NCTC 13174 / 8081).